The primary structure comprises 150 residues: MQLGRKVTSHHDIDRFGVASTADESVYRPLPPRLRLAQVNLSRRRCRTQSDMYKSRFSECTVQSVDVSVTELRAHLSDWLDRARAGGEVVITERGIPIARLAALDSTDTLERLTAEGVIGKATAQRPVAAGRPRPRPQRPVSDRVSDQRR.

A disordered region spans residues 124–150 (AQRPVAAGRPRPRPQRPVSDRVSDQRR). The span at 141-150 (VSDRVSDQRR) shows a compositional bias: basic and acidic residues.

Belongs to the phD/YefM antitoxin family.

Possibly the antitoxin component of a type II toxin-antitoxin (TA) system. Its cognate toxin is VapC45 (Potential). This chain is Putative antitoxin VapB45 (vapB45), found in Mycobacterium tuberculosis (strain CDC 1551 / Oshkosh).